Here is a 2294-residue protein sequence, read N- to C-terminus: Protein Ycf2 (2294 aa).

Residue 1648–1655 (GSIGTGRS) coordinates ATP.

This sequence belongs to the Ycf2 family.

The protein localises to the plastid. The protein resides in the chloroplast stroma. In terms of biological role, probable ATPase of unknown function. Its presence in a non-photosynthetic plant (Epifagus virginiana) and experiments in tobacco indicate that it has an essential function which is probably not related to photosynthesis. This Arabidopsis thaliana (Mouse-ear cress) protein is Protein Ycf2.